Consider the following 185-residue polypeptide: Ribosome-recycling factor (185 aa).

Belongs to the RRF family.

Its subcellular location is the cytoplasm. In terms of biological role, responsible for the release of ribosomes from messenger RNA at the termination of protein biosynthesis. May increase the efficiency of translation by recycling ribosomes from one round of translation to another. The protein is Ribosome-recycling factor of Listeria welshimeri serovar 6b (strain ATCC 35897 / DSM 20650 / CCUG 15529 / CIP 8149 / NCTC 11857 / SLCC 5334 / V8).